The sequence spans 598 residues: Arginine--tRNA ligase (598 aa).

Residues 131 to 141 (ANPTGPMHVGH) carry the 'HIGH' region motif. The disordered stretch occupies residues 288-309 (KLPPPKSKKGQPPPQAQPDEEG).

The protein belongs to the class-I aminoacyl-tRNA synthetase family. As to quaternary structure, monomer.

It localises to the cytoplasm. The enzyme catalyses tRNA(Arg) + L-arginine + ATP = L-arginyl-tRNA(Arg) + AMP + diphosphate. In Anaeromyxobacter dehalogenans (strain 2CP-C), this protein is Arginine--tRNA ligase.